We begin with the raw amino-acid sequence, 966 residues long: Regulator of telomere elongation helicase 1 homolog (966 aa).

The 278-residue stretch at 7–284 (AGIPVHFPFE…QDMAGDEPKD (278 aa)) folds into the Helicase ATP-binding domain. ATP is bound at residue 42–49 (SPTGTGKT). Positions 146, 164, 173, and 209 each coordinate [4Fe-4S] cluster. Residues 233–236 (DEAH) carry the DEAH box motif. The interval 844-864 (VKIHKRERSSPTAPESTSQVS) is disordered. Over residues 853 to 863 (SPTAPESTSQV) the composition is skewed to polar residues. Thr855 is modified (phosphothreonine).

It belongs to the helicase family. RAD3/XPD subfamily.

Its subcellular location is the nucleus. The catalysed reaction is ATP + H2O = ADP + phosphate + H(+). Its function is as follows. A probable ATP-dependent DNA helicase implicated in DNA repair and the maintenance of genomic stability. Acts as an anti-recombinase to counteract toxic recombination and limit crossover during meiosis. Regulates meiotic recombination and crossover homeostasis by physically dissociating strand invasion events and thereby promotes noncrossover repair by meiotic synthesis dependent strand annealing (SDSA) as well as disassembly of D loop recombination intermediates. This Drosophila sechellia (Fruit fly) protein is Regulator of telomere elongation helicase 1 homolog.